Reading from the N-terminus, the 415-residue chain is Isocitrate dehydrogenase [NADP] 1 (415 aa).

Thr104 contacts NADP(+). Residues Ser113, Asn115, Arg119, Arg129, and Arg153 each coordinate D-threo-isocitrate. Position 307 (Asp307) interacts with Mg(2+). NADP(+) is bound by residues 339 to 345 (HGTAPKY), Asn352, Tyr390, and Arg394.

Belongs to the isocitrate and isopropylmalate dehydrogenases family. Homodimer. Mg(2+) serves as cofactor. The cofactor is Mn(2+).

It carries out the reaction D-threo-isocitrate + NADP(+) = 2-oxoglutarate + CO2 + NADPH. Catalyzes the oxidative decarboxylation of isocitrate to 2-oxoglutarate and carbon dioxide with the concomitant reduction of NADP(+). The polypeptide is Isocitrate dehydrogenase [NADP] 1 (Colwellia maris).